The following is a 181-amino-acid chain: Translationally-controlled tumor protein homolog (181 aa).

In terms of domain architecture, TCTP spans 1 to 181 (MLIFKDAFTD…VKEALIEEKQ (181 aa)).

Belongs to the TCTP family.

Its subcellular location is the cytoplasm. Functionally, involved in calcium binding and microtubule stabilization. The polypeptide is Translationally-controlled tumor protein homolog (Brugia malayi (Filarial nematode worm)).